Consider the following 453-residue polypeptide: Probable phenylalanine--tRNA ligase, mitochondrial (453 aa).

The transit peptide at 1 to 27 (MLLTLRVQGARHWLKSTRCLASSAAPA) directs the protein to the mitochondrion. Substrate contacts are provided by residues 142 to 145 (TAHQ), R164, 171 to 173 (THY), 178 to 180 (QAD), E285, and F310. The 98-residue stretch at 356-453 (SHYPQCTNDL…SVDSFNVQIR (98 aa)) folds into the FDX-ACB domain.

This sequence belongs to the class-II aminoacyl-tRNA synthetase family.

Its subcellular location is the mitochondrion matrix. It catalyses the reaction tRNA(Phe) + L-phenylalanine + ATP = L-phenylalanyl-tRNA(Phe) + AMP + diphosphate + H(+). Its function is as follows. Is responsible for the charging of tRNA(Phe) with phenylalanine in mitochondrial translation. This chain is Probable phenylalanine--tRNA ligase, mitochondrial, found in Drosophila melanogaster (Fruit fly).